A 245-amino-acid polypeptide reads, in one-letter code: Orotidine 5'-phosphate decarboxylase (245 aa).

Substrate is bound by residues Asp-22, Lys-44, 71-80, Thr-131, Arg-192, Gln-201, Gly-221, and Arg-222; that span reads DLKFHDIPNT. Catalysis depends on Lys-73, which acts as the Proton donor.

Belongs to the OMP decarboxylase family. Type 1 subfamily. As to quaternary structure, homodimer.

The catalysed reaction is orotidine 5'-phosphate + H(+) = UMP + CO2. Its pathway is pyrimidine metabolism; UMP biosynthesis via de novo pathway; UMP from orotate: step 2/2. Its function is as follows. Catalyzes the decarboxylation of orotidine 5'-monophosphate (OMP) to uridine 5'-monophosphate (UMP). This Salmonella typhi protein is Orotidine 5'-phosphate decarboxylase.